The following is a 1248-amino-acid chain: Probable serine/threonine-protein kinase DDB_G0278509 (1248 aa).

Disordered regions lie at residues 1–26 (MSKV…NGEY), 40–61 (SVNG…EEDY), 100–125 (QSYK…DHLE), 180–220 (QNNN…TKNN), and 235–338 (SIDS…NNNK). Residues 102–117 (YKLSNSGESMNRSINQ) are compositionally biased toward polar residues. Residues 181-216 (NNNNNNSNSNSNSNSNSNNNNNNNNNNNNNNNNNNN) are compositionally biased toward low complexity. 13 LRR repeats span residues 386 to 407 (SSTE…DEKE), 411 to 432 (GYKI…AFTN), 435 to 457 (NLEQ…EFLK), 458 to 480 (HLTI…GNLS), 481 to 502 (FLRE…GNLY), 503 to 524 (NLKK…CVEP), 527 to 548 (QLQT…TTTT), 572 to 593 (NLKQ…LRHL), 595 to 616 (KLHS…VVAS), 619 to 641 (RLAK…NNLS), 642 to 663 (SLIE…ICYL), 665 to 687 (NLKK…GFLT), and 688 to 708 (KLVD…SFLK). Positions 825 to 873 (YPFQKLDPIPQSLYSSSNPRSHTESDIQKLKNNDETITTTNSSISTTSS) are disordered. The segment covering 845–858 (SHTESDIQKLKNND) has biased composition (basic and acidic residues). Residues 860 to 873 (TITTTNSSISTTSS) are compositionally biased toward low complexity. In terms of domain architecture, Protein kinase spans 946–1239 (IQFFNLIGQG…SIYHRLENLM (294 aa)). Residues 952–960 (IGQGGFSKV) and lysine 973 each bind ATP. The Proton acceptor role is filled by aspartate 1069. The tract at residues 1106-1135 (NNTNNTATSSTTTSSANGANSISNNNNNGT) is disordered.

Belongs to the protein kinase superfamily. TKL Ser/Thr protein kinase family.

The enzyme catalyses L-seryl-[protein] + ATP = O-phospho-L-seryl-[protein] + ADP + H(+). It carries out the reaction L-threonyl-[protein] + ATP = O-phospho-L-threonyl-[protein] + ADP + H(+). The sequence is that of Probable serine/threonine-protein kinase DDB_G0278509 from Dictyostelium discoideum (Social amoeba).